Here is a 640-residue protein sequence, read N- to C-terminus: uncharacterized protein (640 aa).

The next 14 membrane-spanning stretches (helical) occupy residues 8–28 (GGVVTSGVGVAGVGVGLLGMF), 52–72 (LGGFFMALTGAVAAPVGCYLI), 90–110 (LFVAAMLLVPAAGSVTTFLLA), 136–156 (LWYAVMTQLGFIAILVGLVVL), 179–199 (VFMLTLVGFGSKAGLVPLHAW), 208–228 (PSPVSALMSAAMVNLGIYGIV), 241–261 (WWGLALLAVGGTSALYGVLQA), 277–297 (ENMGLITLALGAATLFADTGA), 298–318 (YGPASIAAAAAMLHMIAHAAF), 352–372 (TVFFGVAALGACGLPLGAGFV), 391–411 (IVALTTPLAVGVVALATGLSV), 446–466 (AIAAGACLVLAVAPLLVAPMV), 497–517 (IAPGVIAAAVLAAALAVAVLA), and 619–639 (GSVHRYLAYGALGVLIVLVVA).

Belongs to the complex I subunit 4 family.

It is found in the cell membrane. This is an uncharacterized protein from Mycobacterium tuberculosis (strain CDC 1551 / Oshkosh).